The following is a 403-amino-acid chain: Acetate kinase (403 aa).

A Mg(2+)-binding site is contributed by asparagine 7. An ATP-binding site is contributed by lysine 14. Arginine 97 contributes to the substrate binding site. The active-site Proton donor/acceptor is the aspartate 154. ATP contacts are provided by residues 213–217 (HLGNG), 287–289 (DMR), and 335–339 (GIGEN). Residue glutamate 388 participates in Mg(2+) binding.

Belongs to the acetokinase family. In terms of assembly, homodimer. It depends on Mg(2+) as a cofactor. The cofactor is Mn(2+).

Its subcellular location is the cytoplasm. The catalysed reaction is acetate + ATP = acetyl phosphate + ADP. It participates in metabolic intermediate biosynthesis; acetyl-CoA biosynthesis; acetyl-CoA from acetate: step 1/2. Its function is as follows. Catalyzes the formation of acetyl phosphate from acetate and ATP. Can also catalyze the reverse reaction. The sequence is that of Acetate kinase from Synechococcus sp. (strain JA-2-3B'a(2-13)) (Cyanobacteria bacterium Yellowstone B-Prime).